A 173-amino-acid polypeptide reads, in one-letter code: MERAIQRSDAREQANSERWDGRCGGTITPFKLPDESPSLLEWRLHNSEESEDKDHPLGFKESWSFGKVVFKRYLRYDGTETSLHRTLGSWERNSVNDAASRFLGVSQIGCTYSIRFRGSCLTLSGGSRTLQRLIEMAIRTKRTMLQLTPCEVEGNVSRRRPQGSEAFENKESE.

Over residues 1–21 (MERAIQRSDAREQANSERWDG) the composition is skewed to basic and acidic residues. The tract at residues 1–34 (MERAIQRSDAREQANSERWDGRCGGTITPFKLPD) is disordered.

It belongs to the tombusvirus protein p19 family. As to quaternary structure, homodimer.

Functionally, viral suppressor of RNA silencing which binds specifically to silencing RNAs (siRNAs). Acts as a molecular caliper to specifically select siRNAs based on the length of the duplex region of the RNA. The protein is RNA silencing suppressor p19 of Cucumis sativus (Cucumber).